The sequence spans 178 residues: Fibroin heavy chain (178 aa).

An N-terminal signal peptide occupies residues 1–21 (MRVKTFVILCCALQYVAYTNA). The tract at residues 149 to 178 (AVGAGAGAGAAAGSGAGAGAGYGAASGAGA) is highly repetitive.

As to quaternary structure, silk fibroin elementary unit consists in a disulfide-linked heavy and light chain and a p25 glycoprotein in molar ratios of 6:6:1. This results in a complex of approximately 2.3 MDa. Post-translationally, the interchain disulfide bridge is essential for the intracellular transport and secretion of fibroin. Produced exclusively in the posterior (PSG) section of silk glands, which are essentially modified salivary glands.

Functionally, core component of the silk filament; a strong, insoluble and chemically inert fiber. This is Fibroin heavy chain (FIBH) from Bombyx mandarina (Wild silk moth).